The following is a 375-amino-acid chain: MKWLSRILTVIVTMSMACGALIFNRRHQLKTKTLNFNHKALTIIIPARNEEKRIGHLLHSIIQQQVPVDVIVMNDGSTDETARVARSYGATVVDVVDDTDGKWYGKSHACYQGVTHACTNRIAFVDADVTFLRKDAVETLINQYQLQGEKGLLSVQPYHITKRFYEGFSAIFNLMTVVGMNVFSTLDDGRTNQHAFGPVTLTNKEDYYATGGHKSANRHIIEGFALGSAYTSQSLPVTVYEGFPFVAFRMYQEGFQSLQEGWTKHLSTGAGGTKPKIMTAIVLWLFGSIASILGLCLSLKYRQMSVRKMVALYLSYTTQFIYLHRRVGQFSNLLMVCHPLLFMFFTKIFIQSWKQTHRYGVVEWKGRQYSISKEQ.

4 consecutive transmembrane segments (helical) span residues W3 to F23, F164 to S184, I277 to L297, and F330 to I350.

This sequence belongs to the glycosyltransferase 2 family. CrtQ subfamily.

It is found in the cell membrane. It participates in carotenoid biosynthesis; staphyloxanthin biosynthesis; staphyloxanthin from farnesyl diphosphate: step 4/5. Its function is as follows. Catalyzes the glycosylation of 4,4'-diaponeurosporenoate, i.e. the esterification of glucose at the C1'' position with the carboxyl group of 4,4'-diaponeurosporenic acid, to form glycosyl-4,4'-diaponeurosporenoate. This is a step in the biosynthesis of staphyloxanthin, an orange pigment present in most staphylococci strains. This Staphylococcus aureus (strain Mu50 / ATCC 700699) protein is 4,4'-diaponeurosporenoate glycosyltransferase (crtQ).